We begin with the raw amino-acid sequence, 384 residues long: Putative aminohydrolase MTH_994 (384 aa).

Positions 60, 62, 207, and 291 each coordinate Zn(2+).

The protein belongs to the metallo-dependent hydrolases superfamily. ATZ/TRZ family.

This chain is Putative aminohydrolase MTH_994, found in Methanothermobacter thermautotrophicus (strain ATCC 29096 / DSM 1053 / JCM 10044 / NBRC 100330 / Delta H) (Methanobacterium thermoautotrophicum).